A 266-amino-acid chain; its full sequence is Tryptophan synthase alpha chain (266 aa).

Active-site proton acceptor residues include E51 and D62.

Belongs to the TrpA family. As to quaternary structure, tetramer of two alpha and two beta chains.

It catalyses the reaction (1S,2R)-1-C-(indol-3-yl)glycerol 3-phosphate + L-serine = D-glyceraldehyde 3-phosphate + L-tryptophan + H2O. Its pathway is amino-acid biosynthesis; L-tryptophan biosynthesis; L-tryptophan from chorismate: step 5/5. Functionally, the alpha subunit is responsible for the aldol cleavage of indoleglycerol phosphate to indole and glyceraldehyde 3-phosphate. This Thermosynechococcus vestitus (strain NIES-2133 / IAM M-273 / BP-1) protein is Tryptophan synthase alpha chain.